Here is a 346-residue protein sequence, read N- to C-terminus: [LysW]-lysine/[LysW]-ornithine hydrolase (346 aa).

Histidine 68 serves as a coordination point for Zn(2+). Aspartate 70 is a catalytic residue. Residue aspartate 92 coordinates Zn(2+). The Proton acceptor role is filled by glutamate 122. Glutamate 123, glutamate 146, and histidine 317 together coordinate Zn(2+).

Belongs to the peptidase M20A family. LysK subfamily. The cofactor is Zn(2+). Requires Co(2+) as cofactor.

The protein resides in the cytoplasm. The catalysed reaction is [amino-group carrier protein]-C-terminal-gamma-(L-lysyl)-L-glutamate + H2O = [amino-group carrier protein]-C-terminal-L-glutamate + L-lysine. The enzyme catalyses [amino-group carrier protein]-C-terminal-gamma-(L-ornithyl)-L-glutamate + H2O = [amino-group carrier protein]-C-terminal-L-glutamate + L-ornithine. It participates in amino-acid biosynthesis; L-lysine biosynthesis via AAA pathway; L-lysine from L-alpha-aminoadipate (Thermus route): step 5/5. It functions in the pathway amino-acid biosynthesis; L-arginine biosynthesis. In terms of biological role, catalyzes the release of L-lysine from [LysW]-gamma-L-lysine and the release of L-ornithine from [LysW]-L-ornithine. This is [LysW]-lysine/[LysW]-ornithine hydrolase from Saccharolobus islandicus (strain Y.N.15.51 / Yellowstone #2) (Sulfolobus islandicus).